Here is a 206-residue protein sequence, read N- to C-terminus: Large ribosomal subunit protein uL4 (206 aa).

Belongs to the universal ribosomal protein uL4 family. As to quaternary structure, part of the 50S ribosomal subunit.

Functionally, one of the primary rRNA binding proteins, this protein initially binds near the 5'-end of the 23S rRNA. It is important during the early stages of 50S assembly. It makes multiple contacts with different domains of the 23S rRNA in the assembled 50S subunit and ribosome. In terms of biological role, forms part of the polypeptide exit tunnel. This is Large ribosomal subunit protein uL4 from Bradyrhizobium sp. (strain ORS 278).